A 514-amino-acid chain; its full sequence is Flagellin B (514 aa).

Belongs to the bacterial flagellin family. In terms of assembly, heteromer of FlaA and FlaB. FlaB is located proximal to the hook while the remainder of the filament is composed of the predominant FlaA.

The protein resides in the secreted. Its subcellular location is the bacterial flagellum. Its function is as follows. Flagellin is the subunit protein which polymerizes to form the filaments of bacterial flagella. Important for motility and virulence. The protein is Flagellin B (flaB) of Helicobacter pylori (strain J99 / ATCC 700824) (Campylobacter pylori J99).